A 260-amino-acid chain; its full sequence is Hydroxyethylthiazole kinase (260 aa).

Met-38 provides a ligand contact to substrate. ATP-binding residues include Arg-114 and Thr-159. A substrate-binding site is contributed by Gly-186.

Belongs to the Thz kinase family. Mg(2+) serves as cofactor.

It catalyses the reaction 5-(2-hydroxyethyl)-4-methylthiazole + ATP = 4-methyl-5-(2-phosphooxyethyl)-thiazole + ADP + H(+). It functions in the pathway cofactor biosynthesis; thiamine diphosphate biosynthesis; 4-methyl-5-(2-phosphoethyl)-thiazole from 5-(2-hydroxyethyl)-4-methylthiazole: step 1/1. In terms of biological role, catalyzes the phosphorylation of the hydroxyl group of 4-methyl-5-beta-hydroxyethylthiazole (THZ). This is Hydroxyethylthiazole kinase from Helicobacter pylori (strain HPAG1).